The chain runs to 348 residues: Alcohol dehydrogenase 2 (348 aa).

At Ser2 the chain carries N-acetylserine. Cys44 is a binding site for Zn(2+). His45, Thr46, and His49 together coordinate NAD(+). Positions 67, 68, 98, 101, 104, 112, and 154 each coordinate Zn(2+). Positions 181, 182, 183, 202, and 207 each coordinate NAD(+). Ser213 carries the post-translational modification Phosphoserine. Phe222 serves as a coordination point for NAD(+). Thr223 is subject to Phosphothreonine. Residues Lys226 and Lys234 each participate in a glycyl lysine isopeptide (Lys-Gly) (interchain with G-Cter in ubiquitin) cross-link. Residue Val269 coordinates NAD(+). Residue Ser279 is modified to Phosphoserine. Residue Lys287 forms a Glycyl lysine isopeptide (Lys-Gly) (interchain with G-Cter in ubiquitin) linkage. NAD(+)-binding residues include Ser294 and Val296. Position 316 is a phosphoserine (Ser316). Lys319 participates in a covalent cross-link: Glycyl lysine isopeptide (Lys-Gly) (interchain with G-Cter in ubiquitin). Arg341 is a binding site for NAD(+).

It belongs to the zinc-containing alcohol dehydrogenase family. Homotetramer. Zn(2+) serves as cofactor.

It localises to the cytoplasm. It catalyses the reaction a primary alcohol + NAD(+) = an aldehyde + NADH + H(+). It carries out the reaction a secondary alcohol + NAD(+) = a ketone + NADH + H(+). The enzyme catalyses ethanol + NAD(+) = acetaldehyde + NADH + H(+). The catalysed reaction is butan-1-ol + NAD(+) = butanal + NADH + H(+). It catalyses the reaction hexan-1-ol + NAD(+) = hexanal + NADH + H(+). Functionally, preferentially oxidative, glucose-repressed isozyme that catalyzes the conversion of ethanol to acetaldehyde. Main enzyme involved in ethanol consumption. Acts on a variety of primary unbranched aliphatic alcohols. Also produces ethanol from glucose, albeit less than ADH1. This is Alcohol dehydrogenase 2 (ADH2) from Saccharomyces cerevisiae (strain ATCC 204508 / S288c) (Baker's yeast).